Here is a 30-residue protein sequence, read N- to C-terminus: Cycloviolacin-O7 (30 aa).

Positions 1–30 form a cross-link, cyclopeptide (Ser-Asn); it reads SIPCGESCVWIPCTITALAGCKCKSKVCYN. 3 cysteine pairs are disulfide-bonded: Cys4–Cys21, Cys8–Cys23, and Cys13–Cys28.

Post-translationally, this is a cyclic peptide.

Functionally, probably participates in a plant defense mechanism. In Viola odorata (Sweet violet), this protein is Cycloviolacin-O7.